The primary structure comprises 882 residues: Piwi-like protein 3 (882 aa).

A compositionally biased stretch (basic residues) spans 1-15 (MPGRARTRARGRARR). The interval 1–91 (MPGRARTRAR…EAGLHTAPLQ (91 aa)) is disordered. The segment covering 32 to 46 (SATTQEPPQLQSTPR) has biased composition (polar residues). Positions 293–406 (TAYDFIKRTS…LIPQLCHMTG (114 aa)) constitute a PAZ domain. The 291-residue stretch at 578-868 (KVICILPNDD…LAYLVGQSIH (291 aa)) folds into the Piwi domain.

It belongs to the argonaute family. Piwi subfamily. Expressed in testis.

The protein localises to the cytoplasm. In terms of biological role, may play a role during spermatogenesis by repressing transposable elements and preventing their mobilization, which is essential for the germline integrity. Acts via the piRNA metabolic process, which mediates the repression of transposable elements during meiosis by forming complexes composed of piRNAs and Piwi proteins and govern the methylation and subsequent repression of transposons. Directly binds piRNAs, a class of 24 to 30 nucleotide RNAs that are generated by a Dicer-independent mechanism and are primarily derived from transposons and other repeated sequence elements. Besides their function in transposable elements repression, piRNAs are probably involved in other processes during meiosis such as translation regulation. This Homo sapiens (Human) protein is Piwi-like protein 3 (PIWIL3).